The primary structure comprises 850 residues: Polyhomeotic-like protein 2 (850 aa).

Disordered stretches follow at residues 1–79, 233–314, 335–386, 402–436, and 528–553; these read MENE…QYLQ, QQTP…RAVP, LPQP…DHAL, THVH…PPQR, and MTSG…KPPQ. The span at 15-32 shows a compositional bias: low complexity; the sequence is SVTTNTSGTNSSSGCISS. Residues 33–56 form an interaction with BMI1 region; sequence SGGGGGSGGRPTAPQISVYSGIPD. Residues 343–352 are compositionally biased toward low complexity; the sequence is PQPQFVAQQQ. Composition is skewed to polar residues over residues 368 to 380 and 402 to 425; these read LASV…LQSS and THVH…SQNG. The span at 529-543 shows a compositional bias: low complexity; sequence TSGNGNSASSIAGTA. The short motif at 550–579 is the HD1 element; sequence KPPQAIVKPQILTHVIEGFVIQEGAEPFPV. Glycyl lysine isopeptide (Lys-Gly) (interchain with G-Cter in SUMO2) cross-links involve residues K590 and K592. The interval 597–624 is disordered; the sequence is FLPEKPPQQDHTTTTDSEMEEPYLQESK. T611 bears the Phosphothreonine mark. S613 is subject to Phosphoserine. Residue K624 forms a Glycyl lysine isopeptide (Lys-Gly) (interchain with G-Cter in SUMO2) linkage. The FCS-type zinc-finger motif lies at 625–659; it reads EEGTPLKLKCELCGRVDFAYKFKRSKRFCSMACAK. Residues C634, C637, C653, and C657 each contribute to the Zn(2+) site. 2 disordered regions span residues 676–712 and 725–764; these read RSKL…SGTV and SQED…LDLP. K694 participates in a covalent cross-link: Glycyl lysine isopeptide (Lys-Gly) (interchain with G-Cter in SUMO2). A compositionally biased stretch (polar residues) spans 696–712; the sequence is SLPTLTKDTKKQPSGTV. S743 is subject to Phosphoserine. Positions 786–850 constitute an SAM domain; sequence WNVEDVYEFI…YARISMLKDS (65 aa). K839 is covalently cross-linked (Glycyl lysine isopeptide (Lys-Gly) (interchain with G-Cter in SUMO2)).

Component of a PRC1-like complex. Interacts with CBX4. Interacts with BMI1, PCGF2, PHC1 and RNF2. Interacts with CHTOP. Interacts with the N-terminal region of the SP1 transcription factor and with MAPKAPK2. Interacts with SAMD7. Interacts with SAMD11. As to expression, isoform 2 is ubiquitously expressed in embryos and adult tissues at much higher level than isoform 1.

It localises to the nucleus. In terms of biological role, component of a Polycomb group (PcG) multiprotein PRC1-like complex, a complex class required to maintain the transcriptionally repressive state of many genes, including Hox genes, throughout development. PcG PRC1 complex acts via chromatin remodeling and modification of histones; it mediates monoubiquitination of histone H2A 'Lys-119', rendering chromatin heritably changed in its expressibility. The protein is Polyhomeotic-like protein 2 (Phc2) of Mus musculus (Mouse).